We begin with the raw amino-acid sequence, 430 residues long: Adenylosuccinate synthetase (430 aa).

GTP is bound by residues Gly13–Lys19 and Gly41–Thr43. The active-site Proton acceptor is the Asp14. Mg(2+) contacts are provided by Asp14 and Gly41. Residues Asp14 to Lys17, Asn39 to His42, Thr130, Arg144, Gln225, Thr240, and Arg304 each bind IMP. His42 functions as the Proton donor in the catalytic mechanism. Ala300–Arg306 is a substrate binding site. GTP is bound by residues Arg306, Lys332–Asp334, and Ser414–Gly416.

The protein belongs to the adenylosuccinate synthetase family. Homodimer. The cofactor is Mg(2+).

It localises to the cytoplasm. The catalysed reaction is IMP + L-aspartate + GTP = N(6)-(1,2-dicarboxyethyl)-AMP + GDP + phosphate + 2 H(+). The protein operates within purine metabolism; AMP biosynthesis via de novo pathway; AMP from IMP: step 1/2. Its function is as follows. Plays an important role in the de novo pathway of purine nucleotide biosynthesis. Catalyzes the first committed step in the biosynthesis of AMP from IMP. The polypeptide is Adenylosuccinate synthetase (Pseudomonas paraeruginosa (strain DSM 24068 / PA7) (Pseudomonas aeruginosa (strain PA7))).